The chain runs to 266 residues: HLA class II histocompatibility antigen, DR beta 3 chain (266 aa).

The N-terminal stretch at 1–29 is a signal peptide; the sequence is MVCLKLPGGSSLAALTVTLMVLSSRLAFA. The tract at residues 30–124 is beta-1; it reads GDTRPRFLEL…GESFTVQRRV (95 aa). Over 30–227 the chain is Extracellular; it reads GDTRPRFLEL…RARSESAQSK (198 aa). 2 disulfides stabilise this stretch: Cys44–Cys108 and Cys146–Cys202. Residue Asn48 is glycosylated (N-linked (GlcNAc...) asparagine). The interval 125-227 is beta-2; it reads HPQVTVYPAK…RARSESAQSK (103 aa). The Ig-like C1-type domain occupies 126–214; the sequence is PQVTVYPAKT…EHPSVTSALT (89 aa). The chain crosses the membrane as a helical span at residues 228–248; that stretch reads MLSGVGGFVLGLLFLGAGLFI. Over 249–266 the chain is Cytoplasmic; sequence YFRNQKGHSGLQPTGFLS.

The protein belongs to the MHC class II family. As to quaternary structure, heterotrimer that consists of an alpha chain HLA-DRA, a beta chain HLA-DRB1 and a peptide (peptide-MHCII). Newly synthesized alpha and beta chains forms a heterodimer (MHCII) that associates with the CD74/invariant chain (Ii) in the endoplasmic reticulum (ER). Ii is a trimer composed of three subunits and each subunit interacts with one MHCII dimer, blocking the peptide-binding cleft. As a result, MHCII molecules cannot bind peptides present in the ER. The complex of MHCII and CD74/Ii is transported in vesicles from ER to Golgi to lysosomes, where it encounters antigenic peptides generated via proteolysis of endocytosed antigens. MHCII dimers are dissociated from CD74/Ii by the combined action of proteolysis and HLA-DM. Lysosomal enzymes such as cathepsin, degrade CD74/Ii leaving a 24 amino acid remnant called class II-associated Ii or CLIP. Interacts (via the peptide binding cleft) with CLIP; this interaction inhibits antigen peptide binding before entry in the endosomal compartment. The displacement of CLIP and replacement by a high affinity peptide in lysosomes is performed by HLA-DM heterodimer. HLA-DM catalyzes CLIP dissociation from MHCII, stabilizes empty MHCII and mediates the selection of high affinity peptides. Interacts with HLA-DM heterodimer; this interaction is direct. Interacts with TCR (via CDR3). Interacts (via beta-2 domain) with CD4 coreceptor (via Ig-like V-type domain); this interaction is of exceptionally low affinity yet necessary for optimal recognition of antigenic peptides. Ubiquitinated by MARCHF1 and MARCHF8 at Lys-254 leading to sorting into the endosome system and down-regulation of MHC class II. In terms of tissue distribution, expressed in professional APCs: monocyte/macrophages, dendritic cells and B cells (at protein level).

It is found in the cell membrane. It localises to the endoplasmic reticulum membrane. The protein localises to the lysosome membrane. Its subcellular location is the late endosome membrane. The protein resides in the autolysosome membrane. Its function is as follows. A beta chain of antigen-presenting major histocompatibility complex class II (MHCII) molecule. In complex with the alpha chain HLA-DRA, displays antigenic peptides on professional antigen presenting cells (APCs) for recognition by alpha-beta T cell receptor (TCR) on HLA-DRB3-restricted CD4-positive T cells. This guides antigen-specific T-helper effector functions, both antibody-mediated immune response and macrophage activation, to ultimately eliminate the infectious agents and transformed cells. Typically presents extracellular peptide antigens of 10 to 30 amino acids that arise from proteolysis of endocytosed antigens in lysosomes. In the tumor microenvironment, presents antigenic peptides that are primarily generated in tumor-resident APCs likely via phagocytosis of apoptotic tumor cells or macropinocytosis of secreted tumor proteins. Presents peptides derived from intracellular proteins that are trapped in autolysosomes after macroautophagy, a mechanism especially relevant for T cell selection in the thymus and central immune tolerance. The selection of the immunodominant epitopes follows two processing modes: 'bind first, cut/trim later' for pathogen-derived antigenic peptides and 'cut first, bind later' for autoantigens/self-peptides. The anchor residue at position 1 of the peptide N-terminus, usually a large hydrophobic residue, is essential for high affinity interaction with MHCII molecules. In terms of biological role, ALLELE DRB3*01:01: Exclusively presents several immunogenic epitopes derived from C.tetani neurotoxin tetX, playing a significant role in immune recognition and long-term protection. Presents viral epitopes derived from HHV-6B U11, TRX2/U56 and U85 antigens to polyfunctional CD4-positive T cells with cytotoxic activity implicated in control of HHV-6B infection. ALLELE DRB3*02:02 Exclusively presents several immunogenic epitopes derived from C.tetani neurotoxin tetX, playing a significant role in immune recognition and long-term protection. Upon EBV infection, presents to CD4-positive T cells latent antigen EBNA2 (PRSPTVFYNIPPMPLPPSQL) and lytic antigen BZLF1 (LTAYHVSTAPTGSWF) peptides, driving oligoclonal expansion and selection of virus-specific memory T cell subsets with cytotoxic potential to directly eliminate virus-infected B cells. Presents viral epitopes derived from HHV-6B U11, gB/U39 and gH/U48 antigens to polyfunctional CD4-positive T cells with cytotoxic activity implicated in control of HHV-6B infection. Plays a minor role in CD4-positive T cell immune response against Dengue virus by presenting conserved peptides from capsid and non-structural NS3 proteins. Displays peptides derived from IAV matrix protein M, implying a role in protection against IAV infection. In the context of tumor immunesurveillance, may present to T-helper 1 cells an immunogenic epitope derived from tumor-associated antigen WT1 (KRYFKLSHLQMHSRKH), likely providing for effective antitumor immunity in a wide range of solid and hematological malignancies. Presents to Vbeta2-positive T-helper 1 cells specifically an immunodominant peptide derived from tumor antigen CTAG1A/NY-ESO-1(PGVLLKEFTVSGNILTIRLTAADHR) and confers protective memory response. In metastatic epithelial tumors, presents to intratumoral CD4-positive T cells a TP53 neoantigen (HYNYMCNSSCMGSMNRRPILTIITL) carrying G245S hotspot driver mutation and may mediate tumor regression. Functionally, ALLELE DRB3*03:01: Presents a series of conserved peptides derived from the M.tuberculosis PPE family of proteins, in particular PPE29 and PPE33, known to be highly immunogenic. Presents immunogenic epitopes derived from C.tetani neurotoxin tetX, playing a role in immune recognition and long-term protection. Displays immunodominant viral peptides from HCV non-structural protein NS2, as part of a broad range T-helper response to resolve infection. This chain is HLA class II histocompatibility antigen, DR beta 3 chain (HLA-DRB3), found in Homo sapiens (Human).